Here is a 506-residue protein sequence, read N- to C-terminus: Probable Xaa-Pro aminopeptidase PAAG_05466 (506 aa).

Mn(2+) contacts are provided by D285, D296, E433, and E471.

This sequence belongs to the peptidase M24B family. Mn(2+) is required as a cofactor.

The catalysed reaction is Release of any N-terminal amino acid, including proline, that is linked to proline, even from a dipeptide or tripeptide.. Catalyzes the removal of a penultimate prolyl residue from the N-termini of peptides. This is Probable Xaa-Pro aminopeptidase PAAG_05466 from Paracoccidioides lutzii (strain ATCC MYA-826 / Pb01) (Paracoccidioides brasiliensis).